The chain runs to 71 residues: Immune-induced peptide 18 (71 aa).

The N-terminal stretch at 1-24 (MKLIALCCLLLLGLLGFLAAPGVA) is a signal peptide. Residues 25 to 26 (SP) constitute a propeptide that is removed on maturation. A disordered region spans residues 26–71 (PSRHTGPGNGSGSGAGSGNPFRSPSSQQRPLYYDAPIGKPSKTMYA). Positions 32–42 (PGNGSGSGAGS) are enriched in gly residues.

Hemolymph (at protein level).

Its subcellular location is the secreted. This chain is Immune-induced peptide 18 (IM18), found in Drosophila melanogaster (Fruit fly).